The sequence spans 59 residues: Large ribosomal subunit protein uL30 (59 aa).

The protein belongs to the universal ribosomal protein uL30 family. Part of the 50S ribosomal subunit.

This Escherichia coli (strain UTI89 / UPEC) protein is Large ribosomal subunit protein uL30.